Reading from the N-terminus, the 362-residue chain is Histidine protein methyltransferase 1 homolog (362 aa).

A disordered region spans residues Lys-28–Pro-89. The span at Ser-55–Asp-73 shows a compositional bias: polar residues. Phosphoserine is present on residues Ser-62 and Ser-67. His-144 carries the tele-methylhistidine modification. Residues Ile-158 to Thr-162, Gly-185, and Gln-206 to Tyr-208 contribute to the S-adenosyl-L-methionine site. The short motif at Pro-237–Arg-243 is the Nuclear localization signal element. S-adenosyl-L-methionine-binding positions include Gly-259–Trp-261 and Ser-283.

This sequence belongs to the methyltransferase superfamily. METTL18 family. As to quaternary structure, interacts with GRWD1 and members of the heat shock protein 90 and 70 families; these proteins may possibly be methylation substrates for the enzyme. Post-translationally, monomethylated at His-144 through automethylation. Automethylation at His-144 positively regulates the methyltransferase activity toward RPL3. Probably methylated on other residues.

The protein localises to the cytoplasm. It localises to the cytosol. The protein resides in the nucleus. Its subcellular location is the nucleolus. It catalyses the reaction L-histidyl-[protein] + S-adenosyl-L-methionine = N(tele)-methyl-L-histidyl-[protein] + S-adenosyl-L-homocysteine + H(+). In terms of biological role, protein-L-histidine N-tele-methyltransferase that specifically monomethylates RPL3, thereby regulating translation elongation. Histidine methylation of RPL3 regulates translation elongation by slowing ribosome traversal on tyrosine codons: slower elongation provides enough time for proper folding of synthesized proteins and prevents cellular aggregation of tyrosine-rich proteins. In Rattus norvegicus (Rat), this protein is Histidine protein methyltransferase 1 homolog.